The chain runs to 156 residues: Small ribosomal subunit protein uS7 (156 aa).

The protein belongs to the universal ribosomal protein uS7 family. Part of the 30S ribosomal subunit. Contacts proteins S9 and S11.

Functionally, one of the primary rRNA binding proteins, it binds directly to 16S rRNA where it nucleates assembly of the head domain of the 30S subunit. Is located at the subunit interface close to the decoding center, probably blocks exit of the E-site tRNA. In Wigglesworthia glossinidia brevipalpis, this protein is Small ribosomal subunit protein uS7.